A 407-amino-acid chain; its full sequence is ATP-citrate synthase subunit alpha chain protein 1 (407 aa).

Asn-327, Thr-329, and Arg-360 together coordinate citrate.

It belongs to the succinate/malate CoA ligase beta subunit family. Heterooctamer of 4 alpha and 4 beta chains.

Its subcellular location is the cytoplasm. It is found in the cytosol. It carries out the reaction oxaloacetate + acetyl-CoA + ADP + phosphate = citrate + ATP + CoA. ATP citrate-lyase is the primary enzyme responsible for the synthesis of cytosolic acetyl-CoA, used for the elongation of fatty acids and biosynthesis of isoprenoids, flavonoids and malonated derivatives. May supply substrate to the cytosolic acetyl-CoA carboxylase, which generates the malonyl-CoA used for the synthesis of a multitude of compounds, including very long chain fatty acids and flavonoids. In contrast to all known animal ACL enzymes having a homomeric structure, plant ACLs are composed of alpha and beta chains. This is ATP-citrate synthase subunit alpha chain protein 1 (ACLA-1) from Oryza sativa subsp. japonica (Rice).